The sequence spans 94 residues: uncharacterized protein (94 aa).

As to expression, expressed in heart.

This is an uncharacterized protein from Homo sapiens (Human).